Here is a 582-residue protein sequence, read N- to C-terminus: Bifunctional lycopene cyclase/phytoene synthase (582 aa).

The interval 1-261 (MNQNGTRLCY…VVLGLVGCDY (261 aa)) is lycopene beta-cyclase. Helical transmembrane passes span 34–54 (CTYTIPAASALTVLYYPFFTA), 59–79 (KICILITIAILATLPWDSYLI), 99–121 (IPIEEVFFFAIQTYITSLTYCIF), 142–162 (YVVATVILALMGGGTACLLLG), 170–190 (LILVWACPILLFQWMMSYPFL), and 242–262 (ALFFLVSNMMVVLGLVGCDYA). Residues 268 to 582 (YESLSQPASD…LLSALVYRLE (315 aa)) are phytoene synthase.

It in the N-terminal section; belongs to the lycopene beta-cyclase family. The protein in the C-terminal section; belongs to the phytoene/squalene synthase family.

Its subcellular location is the membrane. The enzyme catalyses all-trans-lycopene = gamma-carotene. It catalyses the reaction gamma-carotene = all-trans-beta-carotene. The catalysed reaction is 2 (2E,6E,10E)-geranylgeranyl diphosphate = 15-cis-phytoene + 2 diphosphate. The protein operates within carotenoid biosynthesis; beta-carotene biosynthesis. It functions in the pathway carotenoid biosynthesis; phytoene biosynthesis; all-trans-phytoene from geranylgeranyl diphosphate: step 1/1. In terms of biological role, bifunctional enzyme that catalyzes the reactions from geranylgeranyl diphosphate to phytoene (phytoene synthase) and lycopene to beta-carotene via the intermediate gamma-carotene (lycopene cyclase). The protein is Bifunctional lycopene cyclase/phytoene synthase of Aspergillus niger (strain ATCC MYA-4892 / CBS 513.88 / FGSC A1513).